An 85-amino-acid chain; its full sequence is Large ribosomal subunit protein bL27 (85 aa).

The interval 1-20 is disordered; it reads MAHKKAGGSTRNGRDSESKR.

The protein belongs to the bacterial ribosomal protein bL27 family.

This Yersinia pseudotuberculosis serotype O:1b (strain IP 31758) protein is Large ribosomal subunit protein bL27.